Reading from the N-terminus, the 230-residue chain is Large ribosomal subunit protein uL1 (230 aa).

This sequence belongs to the universal ribosomal protein uL1 family. In terms of assembly, part of the 50S ribosomal subunit.

Its function is as follows. Binds directly to 23S rRNA. The L1 stalk is quite mobile in the ribosome, and is involved in E site tRNA release. Functionally, protein L1 is also a translational repressor protein, it controls the translation of the L11 operon by binding to its mRNA. This is Large ribosomal subunit protein uL1 from Rhodopseudomonas palustris (strain BisA53).